Here is a 564-residue protein sequence, read N- to C-terminus: Dihydroxy-acid dehydratase (564 aa).

Asp80 contributes to the Mg(2+) binding site. Position 121 (Cys121) interacts with [2Fe-2S] cluster. Mg(2+) contacts are provided by Asp122 and Lys123. The residue at position 123 (Lys123) is an N6-carboxylysine. Cys194 contacts [2Fe-2S] cluster. Glu447 serves as a coordination point for Mg(2+). Residue Ser473 is the Proton acceptor of the active site.

It belongs to the IlvD/Edd family. Homodimer. [2Fe-2S] cluster serves as cofactor. It depends on Mg(2+) as a cofactor.

It catalyses the reaction (2R)-2,3-dihydroxy-3-methylbutanoate = 3-methyl-2-oxobutanoate + H2O. The enzyme catalyses (2R,3R)-2,3-dihydroxy-3-methylpentanoate = (S)-3-methyl-2-oxopentanoate + H2O. It participates in amino-acid biosynthesis; L-isoleucine biosynthesis; L-isoleucine from 2-oxobutanoate: step 3/4. Its pathway is amino-acid biosynthesis; L-valine biosynthesis; L-valine from pyruvate: step 3/4. Its function is as follows. Functions in the biosynthesis of branched-chain amino acids. Catalyzes the dehydration of (2R,3R)-2,3-dihydroxy-3-methylpentanoate (2,3-dihydroxy-3-methylvalerate) into 2-oxo-3-methylpentanoate (2-oxo-3-methylvalerate) and of (2R)-2,3-dihydroxy-3-methylbutanoate (2,3-dihydroxyisovalerate) into 2-oxo-3-methylbutanoate (2-oxoisovalerate), the penultimate precursor to L-isoleucine and L-valine, respectively. The protein is Dihydroxy-acid dehydratase of Listeria welshimeri serovar 6b (strain ATCC 35897 / DSM 20650 / CCUG 15529 / CIP 8149 / NCTC 11857 / SLCC 5334 / V8).